The primary structure comprises 509 residues: Lysine--tRNA ligase (509 aa).

Residues 1 to 18 are compositionally biased toward polar residues; it reads MSEQNPTQAAKQAPQQEL. Positions 1 to 20 are disordered; sequence MSEQNPTQAAKQAPQQELND. Residues glutamate 418 and glutamate 425 each coordinate Mg(2+).

Belongs to the class-II aminoacyl-tRNA synthetase family. Homodimer. Mg(2+) is required as a cofactor.

It is found in the cytoplasm. It catalyses the reaction tRNA(Lys) + L-lysine + ATP = L-lysyl-tRNA(Lys) + AMP + diphosphate. This chain is Lysine--tRNA ligase, found in Psychromonas ingrahamii (strain DSM 17664 / CCUG 51855 / 37).